Here is a 301-residue protein sequence, read N- to C-terminus: MKIAILSRNRRLYSTRRLVEACTQRGHEVRVIDILKCYIDIASASPAIWYMGEKLEGFDAVIPRIGASVTHYGLAVIRQFEMMGVYCLTESIALGRSRDKLRALQLLSRKGIGLPKTSFAYNVYDARELIKLVGGTPLVLKLCEGTQGKGIVLAETQKAAESVIEAFRELRAEFLVQEFIKEANGSDVRCFVVGDKVVASMERTAQDGEFRSNLHRGGTAKVTKLSPTERRTAIKAAQTMGLKVAGVDLLRSSRGPLVMEVNSSPGLEGIESATGKDIAGLIVAYMEENAKPVTTTRAGKG.

The ATP-grasp domain occupies 104–287 (LQLLSRKGIG…IAGLIVAYME (184 aa)). ATP is bound by residues Lys141, 178 to 179 (EF), Asp187, and 211 to 213 (RSN). 3 residues coordinate Mg(2+): Asp248, Glu260, and Asn262. 3 residues coordinate Mn(2+): Asp248, Glu260, and Asn262.

It belongs to the RimK family. Mg(2+) serves as cofactor. It depends on Mn(2+) as a cofactor.

In Cellvibrio japonicus (strain Ueda107) (Pseudomonas fluorescens subsp. cellulosa), this protein is Probable alpha-L-glutamate ligase.